Reading from the N-terminus, the 372-residue chain is Alanine dehydrogenase 1 (372 aa).

The active site involves H94. Position 170–200 (170–200 (TYVIFGGGVAATNAANVALGLNAKVIIIELN)) interacts with NAD(+).

It belongs to the AlaDH/PNT family.

The catalysed reaction is L-alanine + NAD(+) + H2O = pyruvate + NH4(+) + NADH + H(+). It functions in the pathway amino-acid degradation; L-alanine degradation via dehydrogenase pathway; NH(3) and pyruvate from L-alanine: step 1/1. In terms of biological role, may play a role in cell wall synthesis as L-alanine is an important constituent of the peptidoglycan layer. The chain is Alanine dehydrogenase 1 (ald1) from Staphylococcus aureus (strain MRSA252).